Here is a 301-residue protein sequence, read N- to C-terminus: MNPQDIKTALGSGLLSFPVTHFHADGRFNAESYKQHIEWLAGYDAPVLFAAGGTGEFFSLAPSEIPGIVSAAKEAAGKTAIVAGCGFGSVVGVEIAKAAEKAGADGLLLLPHYLIDAPQEGLYALVKQICDAVGIGVMVYNRDNSVLGVETLARLCDACPNLVGFKDGTGQIGLVRQITATMGDRLIYLGGMPTAELFAEAYLGAGFTTYSSAVFNFVPGLAVEFYRALRAGDRPTCERLLRDFFYPFMAIRNRRKGYAVAAIKAGVRLQGFAAGPVRAPLDDLTIEEEAMLDALIGTWKR.

Belongs to the DapA family.

The catalysed reaction is 5-dehydro-4-deoxy-D-glucarate + H(+) = 2,5-dioxopentanoate + CO2 + H2O. Its pathway is carbohydrate acid metabolism; D-glucarate degradation; 2,5-dioxopentanoate from D-glucarate: step 2/2. The protein is Probable 5-dehydro-4-deoxyglucarate dehydratase of Xanthobacter autotrophicus (strain ATCC BAA-1158 / Py2).